Here is a 356-residue protein sequence, read N- to C-terminus: MDSIEKVSKNLIEEAYLTKASDIHIVPRERDAIIHFRVDHALLKKRDMKKEECVRLISHFKFLSAMDIGERRKPQNGSLTLKLKEGNVHLRMSTLPTINEESLVIRVMPQYNIPSIDKLSLFPKTGATLLSFLKHSHGMLIFTGPTGSGKTTTLYSLVQYAKKHFNRNIVTLEDPVETRDEDVLQVQVNEKAGVTYSAGLKAILRHDPDMIILGEIRDAETAEIAVRAAMTGHLVLTSLHTRDAKGAIYRLLEFGINMNEIEQTVIAIAAQRLVDLACPFCENGCSSVYCRQSRNTRRASVYELLYGKNLQQCIQEAKGNHANYQYQTLRQIIRKGIALGYLTTNNYDRWVYHEKD.

144–151 (GPTGSGKT) contacts ATP.

The protein belongs to the GSP E family.

It localises to the cell membrane. Functionally, required for uptake of DNA by competent cells. This is Competence protein ComGA (comGA) from Bacillus subtilis (strain 168).